Reading from the N-terminus, the 560-residue chain is Nitrite reductase (560 aa).

The N-terminal stretch at 1 to 26 (MSNVGKPILAGLIAGLSLLGLAVAQA) is a signal peptide. Residues 27-29 (AAP) are N-terminal tail. The region spanning 30 to 126 (EMTAEEKEAS…ARYIQHTPDI (97 aa)) is the Cytochrome c domain. Residues Cys47, Cys50, and His51 each coordinate heme c. Residues 61-80 (KNLEPHWSKTEADGKKTEGG) are disordered. The span at 63 to 78 (LEPHWSKTEADGKKTE) shows a compositional bias: basic and acidic residues. Heme c-binding residues include Thr97 and Met101. A D1-heme domain region spans residues 127 to 560 (PPEFSLQDMK…NVFNTMNDVY (434 aa)). Residues His193, Arg236, Ser237, Tyr256, Arg382, and Gln500 each contribute to the heme d1 site.

As to quaternary structure, homodimer in solution. It depends on heme c as a cofactor. Heme serves as cofactor.

Its subcellular location is the periplasm. It carries out the reaction nitric oxide + Fe(III)-[cytochrome c] + H2O = Fe(II)-[cytochrome c] + nitrite + 2 H(+). The catalysed reaction is A + NH4(+) + H2O = hydroxylamine + AH2 + H(+). This is Nitrite reductase (nirS) from Stutzerimonas stutzeri (Pseudomonas stutzeri).